A 1197-amino-acid chain; its full sequence is ATP-dependent helicase/nuclease subunit A (1197 aa).

One can recognise a UvrD-like helicase ATP-binding domain in the interval 2-458 (KNWTTEQQAA…IDLAKNFRSR (457 aa)). Position 23-30 (23-30 (AAAGSGKT)) interacts with ATP. In terms of domain architecture, UvrD-like helicase C-terminal spans 485–774 (RAALYQGASF…RIMSIHKSKG (290 aa)).

The protein belongs to the helicase family. AddA subfamily. As to quaternary structure, heterodimer of AddA and AddB/RexB. It depends on Mg(2+) as a cofactor.

It carries out the reaction Couples ATP hydrolysis with the unwinding of duplex DNA by translocating in the 3'-5' direction.. It catalyses the reaction ATP + H2O = ADP + phosphate + H(+). In terms of biological role, the heterodimer acts as both an ATP-dependent DNA helicase and an ATP-dependent, dual-direction single-stranded exonuclease. Recognizes the chi site generating a DNA molecule suitable for the initiation of homologous recombination. The AddA nuclease domain is required for chi fragment generation; this subunit has the helicase and 3' -&gt; 5' nuclease activities. This is ATP-dependent helicase/nuclease subunit A from Alkaliphilus metalliredigens (strain QYMF).